The sequence spans 370 residues: Chloromuconate cycloisomerase (370 aa).

The Proton acceptor role is filled by K165. 3 residues coordinate Mn(2+): D194, E220, and D245. The Proton donor role is filled by E323.

Belongs to the mandelate racemase/muconate lactonizing enzyme family. Mn(2+) serves as cofactor.

The enzyme catalyses 2-[(2R)-2-chloro-2,5-dihydro-5-oxofuryl]acetate = 3-chloro-cis,cis-muconate + H(+). It participates in aromatic compound metabolism; 3-chlorocatechol degradation. Highly active toward chlorinated substrates but retains diminished activity toward the non-chlorinated substrates. This is Chloromuconate cycloisomerase (clcB) from Pseudomonas putida (Arthrobacter siderocapsulatus).